A 445-amino-acid polypeptide reads, in one-letter code: Glycerophosphocholine choline phosphodiesterase ENPP6 (445 aa).

The N-terminal stretch at 1–22 (MAGKLGVLLLALVLSLAQPASA) is a signal peptide. Aspartate 32, serine 71, and asparagine 92 together coordinate substrate. Residues aspartate 32 and serine 71 each contribute to the Zn(2+) site. Serine 71 functions as the Nucleophile in the catalytic mechanism. Serine 71 carries the post-translational modification Phosphoserine. Asparagine 100 and asparagine 118 each carry an N-linked (GlcNAc...) asparagine glycan. Cysteine 142 and cysteine 154 are joined by a disulfide. Residue aspartate 193 coordinates substrate. Zn(2+) is bound by residues aspartate 193, histidine 197, aspartate 240, and histidine 241. Position 241 (histidine 241) interacts with substrate. The N-linked (GlcNAc...) asparagine glycan is linked to asparagine 341. Histidine 356 is a binding site for substrate. Histidine 356 lines the Zn(2+) pocket. Residue asparagine 406 is glycosylated (N-linked (GlcNAc...) asparagine). A lipid anchor (GPI-anchor amidated serine) is attached at serine 421. Residues 422–445 (SAPGAPPCACALVTVLLVLLAILA) constitute a propeptide, removed in mature form.

Belongs to the nucleotide pyrophosphatase/phosphodiesterase family. Homodimer; disulfide-linked. Homotetramer. The cofactor is Zn(2+).

Its subcellular location is the cell membrane. It carries out the reaction sn-glycerol 3-phosphocholine + H2O = phosphocholine + glycerol + H(+). The enzyme catalyses a 1-acyl-sn-glycero-3-phosphocholine + H2O = a 1-acyl-sn-glycerol + phosphocholine + H(+). It catalyses the reaction a 1-O-alkyl-sn-glycero-3-phosphocholine + H2O = a 1-O-alkyl-sn-glycerol + phosphocholine + H(+). The catalysed reaction is 1-dodecanoyl-sn-glycero-3-phosphocholine + H2O = 1-dodecanoyl-sn-glycerol + phosphocholine + H(+). It carries out the reaction 1-hexadecanoyl-sn-glycero-3-phosphocholine + H2O = 1-hexadecanoyl-sn-glycerol + phosphocholine + H(+). The enzyme catalyses 1-(5Z,8Z,11Z,14Z-eicosatetraenoyl)-sn-glycero-3-phosphocholine + H2O = 1-(5Z,8Z,11Z,14Z-eicosatetraenoyl)-sn-glycerol + phosphocholine + H(+). It catalyses the reaction 1-tetradecanoyl-sn-glycero-3-phosphocholine + H2O = 1-tetradecanoyl-sn-glycerol + phosphocholine + H(+). The catalysed reaction is sphing-4-enine-phosphocholine + H2O = sphing-4-enine + phosphocholine + H(+). It carries out the reaction 1-(9Z-octadecenoyl)-sn-glycero-3-phosphocholine + H2O = 1-(9Z-octadecenoyl)-sn-glycerol + phosphocholine + H(+). The enzyme catalyses 1-(9Z,12Z)-octadecadienoyl-sn-glycero-3-phosphocholine + H2O = 1-(9Z,12Z-octadecadienoyl)-sn-glycerol + phosphocholine + H(+). It catalyses the reaction glycero-2-phosphocholine + H2O = phosphocholine + glycerol + H(+). With respect to regulation, inhibited by EDTA and EGTA in vitro. In terms of biological role, choline-specific glycerophosphodiesterase that hydrolyzes glycerophosphocholine (GPC) and lysophosphatidylcholine (LPC) and contributes to supplying choline to the cells. Has a preference for LPC with short (12:0 and 14:0) or polyunsaturated (18:2 and 20:4) fatty acids. In vitro, hydrolyzes only choline-containing lysophospholipids, such as sphingosylphosphorylcholine (SPC), platelet-activating factor (PAF) and lysoPAF, but not other lysophospholipids. This chain is Glycerophosphocholine choline phosphodiesterase ENPP6, found in Bos taurus (Bovine).